Reading from the N-terminus, the 186-residue chain is Ribosome-recycling factor (186 aa).

It belongs to the RRF family.

It is found in the cytoplasm. Responsible for the release of ribosomes from messenger RNA at the termination of protein biosynthesis. May increase the efficiency of translation by recycling ribosomes from one round of translation to another. The sequence is that of Ribosome-recycling factor from Bordetella avium (strain 197N).